The chain runs to 235 residues: Phosphoribosylaminoimidazole-succinocarboxamide synthase (235 aa).

Belongs to the SAICAR synthetase family.

It catalyses the reaction 5-amino-1-(5-phospho-D-ribosyl)imidazole-4-carboxylate + L-aspartate + ATP = (2S)-2-[5-amino-1-(5-phospho-beta-D-ribosyl)imidazole-4-carboxamido]succinate + ADP + phosphate + 2 H(+). It participates in purine metabolism; IMP biosynthesis via de novo pathway; 5-amino-1-(5-phospho-D-ribosyl)imidazole-4-carboxamide from 5-amino-1-(5-phospho-D-ribosyl)imidazole-4-carboxylate: step 1/2. This Streptococcus pneumoniae (strain JJA) protein is Phosphoribosylaminoimidazole-succinocarboxamide synthase.